We begin with the raw amino-acid sequence, 176 residues long: ATP-dependent protease subunit HslV (176 aa).

T6 is an active-site residue. 3 residues coordinate Na(+): G161, C164, and T167.

Belongs to the peptidase T1B family. HslV subfamily. A double ring-shaped homohexamer of HslV is capped on each side by a ring-shaped HslU homohexamer. The assembly of the HslU/HslV complex is dependent on binding of ATP.

It localises to the cytoplasm. The catalysed reaction is ATP-dependent cleavage of peptide bonds with broad specificity.. With respect to regulation, allosterically activated by HslU binding. In terms of biological role, protease subunit of a proteasome-like degradation complex believed to be a general protein degrading machinery. This chain is ATP-dependent protease subunit HslV, found in Thermotoga sp. (strain RQ2).